The primary structure comprises 1141 residues: cGMP-inhibited 3',5'-cyclic phosphodiesterase 3A (1141 aa).

Residues Met1–Gly41 form a disordered region. A helical transmembrane segment spans residues Ser62–Gly82. Residues Glu89–Gly111 are disordered. 5 consecutive transmembrane segments (helical) span residues Leu127 to Leu147, Ala157 to Val177, Leu182 to Val202, Leu207 to Glu227, and Phe229 to Ala249. Positions Pro262–Thr309 are disordered. Ser310 is subject to Phosphoserine. Positions Arg433–Thr445 are enriched in low complexity. Positions Arg433–Trp479 are disordered. Residues Pro454–Glu467 are compositionally biased toward basic and acidic residues. A phosphoserine mark is found at Ser492, Ser520, Ser524, and Ser533. Positions His504–Ala643 are disordered. A compositionally biased stretch (pro residues) spans Val522–Gly532. Polar residues predominate over residues Thr618–Leu637. The interval Lys669–Leu1141 is interaction with SLFN12. Positions Pro674 to Glu1093 constitute a PDEase domain. His752 (proton donor) is an active-site residue. Residue His752 participates in AMP binding. His756, His836, Asp837, and Asp950 together coordinate Mn(2+). Positions 837, 950, and 1001 each coordinate AMP. Asp837 contacts Mg(2+). Disordered stretches follow at residues Gly1024–Arg1062 and Gly1098–Leu1141. The segment covering Asp1029 to Ala1046 has biased composition (acidic residues). The residue at position 1033 (Ser1033) is a Phosphoserine. Thr1036 is subject to Phosphothreonine. Residues Gly1098–Ser1113 are compositionally biased toward polar residues. Residue Lys1120 forms a Glycyl lysine isopeptide (Lys-Gly) (interchain with G-Cter in SUMO2) linkage.

It belongs to the cyclic nucleotide phosphodiesterase family. PDE3 subfamily. Homodimer. Interacts with PDE3A; direct low affinity interaction which is stimulated by binding of 17beta-estradiol/E2 to PDE3A and that positively regulates the ribonuclease activity of SLFN12. Mn(2+) is required as a cofactor. It depends on Mg(2+) as a cofactor.

It localises to the membrane. The protein resides in the cytoplasm. Its subcellular location is the cytosol. The enzyme catalyses a nucleoside 3',5'-cyclic phosphate + H2O = a nucleoside 5'-phosphate + H(+). It carries out the reaction 3',5'-cyclic AMP + H2O = AMP + H(+). It catalyses the reaction 3',5'-cyclic GMP + H2O = GMP + H(+). The catalysed reaction is 3',5'-cyclic UMP + H2O = UMP + H(+). Its function is as follows. Cyclic nucleotide phosphodiesterase with specificity for the second messengers cAMP and cGMP, which are key regulators of many important physiological processes. Also has activity toward cUMP. Independently of its catalytic activity it is part of an E2/17beta-estradiol-induced pro-apoptotic signaling pathway. E2 stabilizes the PDE3A/SLFN12 complex in the cytosol, promoting the dephosphorylation of SLFN12 and activating its pro-apoptotic ribosomal RNA/rRNA ribonuclease activity. This apoptotic pathway might be relevant in tissues with high concentration of E2 and be for instance involved in placenta remodeling. The sequence is that of cGMP-inhibited 3',5'-cyclic phosphodiesterase 3A from Rattus norvegicus (Rat).